We begin with the raw amino-acid sequence, 306 residues long: D-alanine--D-alanine ligase B (306 aa).

Catalysis depends on residues Glu-15 and Ser-150. The 203-residue stretch at 101–303 (KLLWQGAGLP…FSQLVVRILE (203 aa)) folds into the ATP-grasp domain. An ATP-binding site is contributed by 134-189 (ISALGLPVIVKPSREGSSVGMSKVVAENALQDALRLAFQHDEEVLIEKWLSGPEFT). Mg(2+) is bound by residues Asp-257, Glu-270, and Asn-272. Ser-281 is an active-site residue.

It belongs to the D-alanine--D-alanine ligase family. As to quaternary structure, monomer. It depends on Mg(2+) as a cofactor. The cofactor is Mn(2+).

Its subcellular location is the cytoplasm. It carries out the reaction 2 D-alanine + ATP = D-alanyl-D-alanine + ADP + phosphate + H(+). Its pathway is cell wall biogenesis; peptidoglycan biosynthesis. Cell wall formation. The protein is D-alanine--D-alanine ligase B (ddlB) of Escherichia coli O157:H7.